The sequence spans 95 residues: RING finger protein Z (95 aa).

The N-myristoyl glycine; by host moiety is linked to residue Gly2. The RING-type; atypical zinc finger occupies 38-74 (CKSCWFANKGLLKCSNHYLCLKCLTLMLRRSDYCGIC). The PTAP/PSAP motif signature appears at 88–91 (PSAP).

The protein belongs to the arenaviridae Z protein family. Interacts with protein NP; this interaction probably directs the encapsidated genome to budding sites. Interacts (via RING domain) with polymerase L; this interaction inhibits viral transcription and replication, Z partially blocks the product exit tunnel for the releasing nascent RNA product. Interacts with the glycoprotein complex; this interaction plays a role in virion budding. Interacts with host eIF4E; this interaction results in eIF4E reduced affinity for its substrate, the 5'-m7 G cap structure. Interacts (via late-budding domain) with host TSG101; this interaction is essential for budding and release of viral particles. Interacts with host RPLP0; this interaction may serve to load ribosome-like particles inside the virion. Interacts with host PML; this interaction induces PML bodies redistribution in the cytoplasm upon viral infection. In terms of processing, myristoylation is required for the role of RING finger protein Z in assembly and budding.

The protein localises to the virion. It is found in the host cytoplasm. The protein resides in the host perinuclear region. Its subcellular location is the host cell membrane. Its function is as follows. Plays a crucial role in virion assembly and budding. Expressed late in the virus life cycle, it acts as an inhibitor of viral transcription and RNA synthesis by interacting with the viral polymerase L. Presumably recruits the NP encapsidated genome to cellular membranes at budding sites via direct interaction with NP. Plays critical roles in the final steps of viral release by interacting with host TSG101, a member of the vacuolar protein-sorting pathway and using other cellular host proteins involved in vesicle formation pathway. The budding of the virus progeny occurs after association of protein Z with the viral glycoprotein complex SSP-GP1-GP2 at the cell periphery, step that requires myristoylation of protein Z. Also selectively represses protein production by associating with host eIF4E. In cell-based minigenome assay, has an inhibitory effect on the ribonucleoprotein machinery (vRNP), which is responsible for the replication and transcription of the viral genome. This chain is RING finger protein Z, found in Neotoma (wood rats).